Consider the following 166-residue polypeptide: Shikimate kinase (166 aa).

ATP is bound at residue 11-16 (GSGKST). Residue S15 coordinates Mg(2+). Residues D33, R57, and G79 each contribute to the substrate site. R117 provides a ligand contact to ATP. A substrate-binding site is contributed by R134.

This sequence belongs to the shikimate kinase family. In terms of assembly, monomer. The cofactor is Mg(2+).

It localises to the cytoplasm. The enzyme catalyses shikimate + ATP = 3-phosphoshikimate + ADP + H(+). It functions in the pathway metabolic intermediate biosynthesis; chorismate biosynthesis; chorismate from D-erythrose 4-phosphate and phosphoenolpyruvate: step 5/7. In terms of biological role, catalyzes the specific phosphorylation of the 3-hydroxyl group of shikimic acid using ATP as a cosubstrate. The polypeptide is Shikimate kinase (Sulfurihydrogenibium sp. (strain YO3AOP1)).